A 238-amino-acid polypeptide reads, in one-letter code: Oxidoreductase dmxR7 (238 aa).

The protein belongs to the avfA family.

The protein operates within secondary metabolite biosynthesis. Functionally, oxidoreductase; part of the gene cluster that mediates the biosynthesis of the dimeric xanthones cryptosporioptides. The pathway begins with the synthesis of atrochrysone thioester by the polyketide synthase dmx-nrPKS. The atrochrysone carboxyl ACP thioesterase dmxR1 then breaks the thioester bond and releases the atrochrysone carboxylic acid from dmx-nrPKS. Atrochrysone carboxylic acid is decarboxylated by the decarboxylase dmxR15, and oxidized by the anthrone oxygenase dmxR16 to yield emodin. Emodin is then reduced to emodin hydroquinone by the oxidoreductase dmxR7. A-ring reduction by the short chain dehydrogenase dmxR18, dehydration by the scytalone dehydratase-like protein dmxR17 and probable spontaneous re-oxidation, results in overall deoxygenation to chrysophanol. Baeyer-Villiger oxidation by the Baeyer-Villiger monooxygenase (BVMO) dmxR6 then yields monodictylactone in equilibrium with monodictyphenone. In the case of the cryptosporioptides biosynthesis, monodictylactone is reduced at C-12 to an alcohol (by the short chain dehydrogenases dmxR12 or dmxR8) and hydroxylated at C-5 by dmxR9, yielding the electron-rich aromatic which could eliminate H(2)O to form the ortho-quinonemethide, followed by tautomerisation to paraquinone and complete the formal reduction to produce the 10-methylgroup. Conjugate addition of C-4a-OH to the resulting paraquinone by the monooxygenase dmxR10 then gives cyclohexadienone, which is then reduced at C-5 by the short chain dehydrogenase dmxR3 to give the dihydroxanthone. The 6,7-epoxide in the cryptosporioptides could be introduced by the cytochrome P450 monooxygenase dmxL3. The highly reducing PKS dmxL2 manufactures butyrate, which is further carboxylated by dmxL1 to form ethylmalonate. It is not yet clear whether the carboxylation occurs while the butyrate is attached to the ACP of dmxL2, but this unusual fungal metabolite could then be esterified to O-5 by the O-acetyltransferase dmxR13. Finally, dimerization performed by dmxR5 gives the observed dimers cryptosporioptides A, B and C as the final products of the pathway. In Cryptosporiopsis sp. (strain 8999), this protein is Oxidoreductase dmxR7.